A 512-amino-acid polypeptide reads, in one-letter code: ATP synthase subunit alpha (512 aa).

169–176 (GDRQTGKT) lines the ATP pocket.

The protein belongs to the ATPase alpha/beta chains family. F-type ATPases have 2 components, CF(1) - the catalytic core - and CF(0) - the membrane proton channel. CF(1) has five subunits: alpha(3), beta(3), gamma(1), delta(1), epsilon(1). CF(0) has three main subunits: a(1), b(2) and c(9-12). The alpha and beta chains form an alternating ring which encloses part of the gamma chain. CF(1) is attached to CF(0) by a central stalk formed by the gamma and epsilon chains, while a peripheral stalk is formed by the delta and b chains.

It is found in the cell inner membrane. The enzyme catalyses ATP + H2O + 4 H(+)(in) = ADP + phosphate + 5 H(+)(out). In terms of biological role, produces ATP from ADP in the presence of a proton gradient across the membrane. The alpha chain is a regulatory subunit. In Dechloromonas aromatica (strain RCB), this protein is ATP synthase subunit alpha.